The chain runs to 285 residues: Polyamine aminopropyltransferase (285 aa).

The PABS domain occupies 5-241 (DTWFTEHFQA…GWWSVTLSSK (237 aa)). Glutamine 35 lines the S-methyl-5'-thioadenosine pocket. Histidine 66 and aspartate 90 together coordinate spermidine. S-methyl-5'-thioadenosine contacts are provided by residues aspartate 110 and 141–142 (DG). Residue aspartate 160 is the Proton acceptor of the active site. 160–163 (DSTD) provides a ligand contact to spermidine. Proline 167 lines the S-methyl-5'-thioadenosine pocket.

Belongs to the spermidine/spermine synthase family. Homodimer or homotetramer.

It is found in the cytoplasm. The enzyme catalyses S-adenosyl 3-(methylsulfanyl)propylamine + putrescine = S-methyl-5'-thioadenosine + spermidine + H(+). It functions in the pathway amine and polyamine biosynthesis; spermidine biosynthesis; spermidine from putrescine: step 1/1. Its function is as follows. Catalyzes the irreversible transfer of a propylamine group from the amino donor S-adenosylmethioninamine (decarboxy-AdoMet) to putrescine (1,4-diaminobutane) to yield spermidine. This Xylella fastidiosa (strain M12) protein is Polyamine aminopropyltransferase.